The chain runs to 150 residues: Catabolic 3-dehydroquinase (150 aa).

The Proton acceptor role is filled by Y24. The substrate site is built by N75, H81, and D88. H101 functions as the Proton donor in the catalytic mechanism. Substrate-binding positions include 102-103 and R112; that span reads VS.

Belongs to the type-II 3-dehydroquinase family. In terms of assembly, homododecamer. Adopts a ring-like structure, composed of an arrangement of two hexameric rings stacked on top of one another.

The catalysed reaction is 3-dehydroquinate = 3-dehydroshikimate + H2O. Its pathway is aromatic compound metabolism; 3,4-dihydroxybenzoate biosynthesis; 3,4-dihydroxybenzoate from 3-dehydroquinate: step 1/2. Is involved in the catabolism of quinate. Allows the utilization of quinate as carbon source via the beta-ketoadipate pathway. This is Catabolic 3-dehydroquinase from Aspergillus clavatus (strain ATCC 1007 / CBS 513.65 / DSM 816 / NCTC 3887 / NRRL 1 / QM 1276 / 107).